A 436-amino-acid chain; its full sequence is Glutamyl-tRNA reductase (436 aa).

Substrate is bound by residues 52-55, Ser-105, 110-112, and Gln-116; these read TCHR and EDQ. Cys-53 acts as the Nucleophile in catalysis. Residue 184 to 189 coordinates NADP(+); sequence GAGEMG.

This sequence belongs to the glutamyl-tRNA reductase family. In terms of assembly, homodimer.

It carries out the reaction (S)-4-amino-5-oxopentanoate + tRNA(Glu) + NADP(+) = L-glutamyl-tRNA(Glu) + NADPH + H(+). It functions in the pathway porphyrin-containing compound metabolism; protoporphyrin-IX biosynthesis; 5-aminolevulinate from L-glutamyl-tRNA(Glu): step 1/2. In terms of biological role, catalyzes the NADPH-dependent reduction of glutamyl-tRNA(Glu) to glutamate 1-semialdehyde (GSA). This is Glutamyl-tRNA reductase from Halobacterium salinarum (strain ATCC 29341 / DSM 671 / R1).